We begin with the raw amino-acid sequence, 875 residues long: DNA gyrase subunit A (875 aa).

The 500-residue stretch at 34 to 533 folds into the Topo IIA-type catalytic domain; it reads LPDVRDGLKP…NSADINLEDL (500 aa). The O-(5'-phospho-DNA)-tyrosine intermediate role is filled by Tyr-122. Residues 560–566 carry the GyrA-box motif; the sequence is QRRGGKG. The segment at 841-875 is disordered; it reads EPVDEEDLDTIDGSAAEGDDEIAPEVDVDDEPEEE. Over residues 857–875 the composition is skewed to acidic residues; sequence EGDDEIAPEVDVDDEPEEE.

It belongs to the type II topoisomerase GyrA/ParC subunit family. As to quaternary structure, heterotetramer, composed of two GyrA and two GyrB chains. In the heterotetramer, GyrA contains the active site tyrosine that forms a transient covalent intermediate with DNA, while GyrB binds cofactors and catalyzes ATP hydrolysis.

The protein localises to the cytoplasm. It catalyses the reaction ATP-dependent breakage, passage and rejoining of double-stranded DNA.. Its function is as follows. A type II topoisomerase that negatively supercoils closed circular double-stranded (ds) DNA in an ATP-dependent manner to modulate DNA topology and maintain chromosomes in an underwound state. Negative supercoiling favors strand separation, and DNA replication, transcription, recombination and repair, all of which involve strand separation. Also able to catalyze the interconversion of other topological isomers of dsDNA rings, including catenanes and knotted rings. Type II topoisomerases break and join 2 DNA strands simultaneously in an ATP-dependent manner. This Shigella flexneri protein is DNA gyrase subunit A.